The chain runs to 266 residues: Protein-ADP-ribose hydrolase (266 aa).

Residues 74 to 265 (TDLKDLKPIK…LYKEALNRDA (192 aa)) form the Macro domain. The ADP-D-ribose site is built by Asp93, Ile94, and Asn107. Residues Cys113, His118, and Cys120 each contribute to the Zn(2+) site. Residues Cys120, Ile121, Asp122, Ser212, Thr213, Gly214, and Phe216 each contribute to the ADP-D-ribose site.

Belongs to the MacroD-type family. Zn-Macro subfamily. As to quaternary structure, monomer. Directly interacts with the lipoylated form of GcvH-L. The cofactor is Zn(2+).

The catalysed reaction is 4-O-(ADP-D-ribosyl)-L-aspartyl-[protein] + H2O = L-aspartyl-[protein] + ADP-D-ribose + H(+). Functionally, ADP-ribosylhydrolase that specifically reverses the SirTM-mediated mono-ADP-ribosylation at an asparatate residue of GcvH-L (SAV0324), by releasing ADP-ribose from the target protein. May play a role in the regulation of the response to host-induced oxidative stress. This chain is Protein-ADP-ribose hydrolase, found in Staphylococcus aureus (strain Mu50 / ATCC 700699).